The chain runs to 90 residues: Barrier-to-autointegration factor-like protein (90 aa).

Belongs to the BAF family. In terms of assembly, homodimer. Heterodimerizes with BANF1. Expressed strongly in testis and pancreas. Also detected in brain, colon, liver, lung, ovary, placenta, prostate, small intestine, spleen and thymus. Not detected in heart, kidney and skeletal muscle.

The protein resides in the nucleus. Its subcellular location is the cytoplasm. May play a role in BANF1 regulation and influence tissue-specific roles of BANF1. The sequence is that of Barrier-to-autointegration factor-like protein (BANF2) from Homo sapiens (Human).